A 156-amino-acid polypeptide reads, in one-letter code: ATP synthase subunit b (156 aa).

The chain crosses the membrane as a helical span at residues 7–27; that stretch reads FFAQMVVFFILWWVVAKFIWP.

The protein belongs to the ATPase B chain family. As to quaternary structure, F-type ATPases have 2 components, F(1) - the catalytic core - and F(0) - the membrane proton channel. F(1) has five subunits: alpha(3), beta(3), gamma(1), delta(1), epsilon(1). F(0) has three main subunits: a(1), b(2) and c(10-14). The alpha and beta chains form an alternating ring which encloses part of the gamma chain. F(1) is attached to F(0) by a central stalk formed by the gamma and epsilon chains, while a peripheral stalk is formed by the delta and b chains.

Its subcellular location is the cell inner membrane. Functionally, f(1)F(0) ATP synthase produces ATP from ADP in the presence of a proton or sodium gradient. F-type ATPases consist of two structural domains, F(1) containing the extramembraneous catalytic core and F(0) containing the membrane proton channel, linked together by a central stalk and a peripheral stalk. During catalysis, ATP synthesis in the catalytic domain of F(1) is coupled via a rotary mechanism of the central stalk subunits to proton translocation. Component of the F(0) channel, it forms part of the peripheral stalk, linking F(1) to F(0). This Cupriavidus taiwanensis (strain DSM 17343 / BCRC 17206 / CCUG 44338 / CIP 107171 / LMG 19424 / R1) (Ralstonia taiwanensis (strain LMG 19424)) protein is ATP synthase subunit b.